The sequence spans 391 residues: Ectodysplasin-A (391 aa).

The span at 1–21 (MGYPEVERREPLPAAAPRERG) shows a compositional bias: basic and acidic residues. The tract at residues 1–28 (MGYPEVERREPLPAAAPRERGSQGCGCR) is disordered. The Cytoplasmic segment spans residues 1–41 (MGYPEVERREPLPAAAPRERGSQGCGCRGAPARAGEGNSCR). The chain crosses the membrane as a helical; Signal-anchor for type II membrane protein span at residues 42–62 (LFLGFFGLSLALHLLTLCCYL). Over 63–391 (ELRSELRRER…AIRLGEAPAS (329 aa)) the chain is Extracellular. 2 disordered regions span residues 72–129 (RGTE…DSQD) and 146–244 (YSEE…TGTR). A compositionally biased stretch (low complexity) spans 86-96 (TSGTLSSPGSL). Residues 180–229 (GPPGPNGPPGPPGPPGPQGPPGIPGIPGIPGTTVMGPPGPPGPPGPQGPP) form the Collagen-like domain. Composition is skewed to pro residues over residues 181–203 (PPGPNGPPGPPGPPGPQGPPGIP) and 216–228 (PPGPPGPPGPQGP). Residues 249–385 (AVVHLQGQGS…HTTFFGAIRL (137 aa)) form the THD domain. The N-linked (GlcNAc...) asparagine glycan is linked to Asn313. A disulfide bridge connects residues Cys332 and Cys346. Residue Asn372 is glycosylated (N-linked (GlcNAc...) asparagine).

It belongs to the tumor necrosis factor family. Homotrimer. The homotrimers may then dimerize and form higher-order oligomers. Post-translationally, N-glycosylated. Processing by furin produces a secreted form.

Its subcellular location is the cell membrane. It is found in the secreted. Its function is as follows. Cytokine which is involved in epithelial-mesenchymal signaling during morphogenesis of ectodermal organs. Functions as a ligand activating the DEATH-domain containing receptors EDAR and EDA2R. Isoform TAA binds only to the receptor EDAR, while isoform TA-A2 binds exclusively to the receptor EDA2R. May also play a role in cell adhesion. Isoform TAA binds only to the receptor EDAR, while isoform TA-A2 binds exclusively to the receptor EDA2R. In terms of biological role, isoform TA-A2 binds exclusively to the receptor EDA2R. This Mus musculus (Mouse) protein is Ectodysplasin-A (Eda).